Consider the following 492-residue polypeptide: Stomatal closure-related actin-binding protein 2 (492 aa).

Residues Leu112–Glu132 adopt a coiled-coil conformation.

This sequence belongs to the SCAB family. Expressed in roots, stems, leaves, siliques and flowers.

The protein resides in the cytoplasm. The protein localises to the cytoskeleton. Functionally, probable plant-specific actin binding protein that bundles and stabilizes microfilaments (MFs). The chain is Stomatal closure-related actin-binding protein 2 from Arabidopsis thaliana (Mouse-ear cress).